The sequence spans 183 residues: Phosphinothricin N-acetyltransferase (183 aa).

One can recognise an N-acetyltransferase domain in the interval 8–173; sequence ADIRRATEAD…WQLDFSLPVP (166 aa). Acetyl-CoA-binding positions include 91-93, 99-104, and asparagine 130; these read VYV and RTGLGS.

This sequence belongs to the acetyltransferase family. PAT/BAR subfamily.

The enzyme catalyses phosphinothricin + acetyl-CoA = N-acetylphosphinothricin + CoA + H(+). Inactivates phosphinothricin (PPT) by transfer of an acetyl group from acetyl CoA. Can also acetylate demethylphosphinothricin but not PTT or glutamate. This enzyme is an effector of phosphinothricin tripeptide (PTT or bialaphos) resistance. In Streptomyces hygroscopicus, this protein is Phosphinothricin N-acetyltransferase.